The chain runs to 346 residues: Protein STAR1 (346 aa).

Residues 23–48 are disordered; that stretch reads QRPPPNGTVHACSKSRPPQLEPGKVG. The ABC transporter domain occupies 112 to 344; that stretch reads IRVRGLTRRS…KHPMARRFLE (233 aa). ATP is bound at residue 146 to 153; that stretch reads GPSGSGKS.

Belongs to the ABC transporter superfamily. ABCI family. As to quaternary structure, interacts with STAR2. Expressed in roots.

It is found in the membrane. In terms of biological role, associates with STAR2 to form a functional transmembrane ABC transporter required for detoxification of aluminum (Al) in roots. Can specifically transport UDP-glucose. The polypeptide is Protein STAR1 (Oryza sativa subsp. japonica (Rice)).